The sequence spans 292 residues: RNA 5'-monophosphate methyltransferase (292 aa).

Residues 1-20 (MAVPTELHGGSVKETAAEKE) are disordered. S-adenosyl-L-methionine-binding positions include R46, N76, D110, 135–136 (DF), and M164. Residues 53–274 (ELLRQLFPES…KQTIETHPIP (222 aa)) enclose the Bin3-type SAM domain.

It belongs to the methyltransferase superfamily. As to quaternary structure, interacts with DICER1; the interaction may be mediated by RNA.

It localises to the cytoplasm. The catalysed reaction is a 5'-end 5'-phospho-ribonucleoside-RNA + S-adenosyl-L-methionine = a 5'-end (5'-methylphospho)-ribonucleoside-RNA + S-adenosyl-L-homocysteine. It catalyses the reaction a 5'-end 5'-phospho-ribonucleoside-RNA + 2 S-adenosyl-L-methionine = a 5'-end (5'-bismethylphospho)-ribonucleoside-RNA + 2 S-adenosyl-L-homocysteine. In terms of biological role, O-methyltransferase that specifically monomethylates 5'-monophosphate of cytoplasmic histidyl tRNA (tRNA(His)), acting as a capping enzyme by protecting tRNA(His) from cleavage by DICER1. Also able, with less efficiently, to methylate the 5' monophosphate of a subset of pre-miRNAs, acting as a negative regulator of miRNA processing. The 5' monophosphate of pre-miRNAs is recognized by DICER1 and is required for pre-miRNAs processing: methylation at this position reduces the processing of pre-miRNAs by DICER1. Was also reported to mediate dimethylation of pre-miR-145; however dimethylation cannot be reproduced by another group which observes a monomethylation of pre-miR-145. The sequence is that of RNA 5'-monophosphate methyltransferase (BCDIN3D) from Pongo abelii (Sumatran orangutan).